We begin with the raw amino-acid sequence, 116 residues long: Somatostatin (116 aa).

Positions 1–24 are cleaved as a signal peptide; that stretch reads MLSCRLQCALAALSIVLALGGVTG. Positions 25 to 88 are excised as a propeptide; it reads APSDPRLRQF…QDEMRLELQR (64 aa). Residue alanine 43 is modified to Alanine amide. A disulfide bond links cysteine 105 and cysteine 116.

This sequence belongs to the somatostatin family. In terms of processing, C-terminal amidation of the neuronostatin peptide is required for its biological activity, including for the regulation of mean arterial pressure.

Its subcellular location is the secreted. Its function is as follows. Inhibits the secretion of pituitary hormones, including that of growth hormone/somatotropin (GH1), PRL, ACTH, luteinizing hormone (LH) and TSH. Also impairs ghrelin- and GnRH-stimulated secretion of GH1 and LH; the inhibition of ghrelin-stimulated secretion of GH1 can be further increased by neuronostatin. Functionally, may enhance low-glucose-induced glucagon release by pancreatic alpha cells. This effect may be mediated by binding to GPR107 and PKA activation. May regulate cardiac contractile function. May compromise cardiomyocyte viability. In the central nervous system, may impair memory retention and may affect hippocampal excitability. May also have anxiolytic and anorexigenic effects. May play a role in arterial pressure regulation. May inhibit basal, but not ghrelin- or GnRH-stimulated secretion of GH1 or LH, but does not affect the release of other pituitary hormones, including PRL, ACTH, FSH or TSH. Potentiates inhibitory action of somatostatin on ghrelin-stimulated secretion of GH1, but not that on GnRH-stimulated secretion of LH. This chain is Somatostatin (SST), found in Bos taurus (Bovine).